Reading from the N-terminus, the 20-residue chain is Ribulose bisphosphate carboxylase small subunit (20 aa).

This sequence belongs to the RuBisCO small chain family. In terms of assembly, heterohexadecamer of 8 large and 8 small subunits.

The protein localises to the plastid. The protein resides in the chloroplast. Functionally, ruBisCO catalyzes two reactions: the carboxylation of D-ribulose 1,5-bisphosphate, the primary event in carbon dioxide fixation, as well as the oxidative fragmentation of the pentose substrate in the photorespiration process. Both reactions occur simultaneously and in competition at the same active site. Although the small subunit is not catalytic it is essential for maximal activity. The polypeptide is Ribulose bisphosphate carboxylase small subunit (Chattonella marina var. antiqua (Red tide flagellate)).